We begin with the raw amino-acid sequence, 597 residues long: Elongation factor 4 (597 aa).

In terms of domain architecture, tr-type G spans 2–184 (KHIRNFSIIA…EIVARIPAPV (183 aa)). Residues 14 to 19 (DHGKST) and 131 to 134 (NKID) each bind GTP.

The protein belongs to the TRAFAC class translation factor GTPase superfamily. Classic translation factor GTPase family. LepA subfamily.

The protein localises to the cell inner membrane. The catalysed reaction is GTP + H2O = GDP + phosphate + H(+). Functionally, required for accurate and efficient protein synthesis under certain stress conditions. May act as a fidelity factor of the translation reaction, by catalyzing a one-codon backward translocation of tRNAs on improperly translocated ribosomes. Back-translocation proceeds from a post-translocation (POST) complex to a pre-translocation (PRE) complex, thus giving elongation factor G a second chance to translocate the tRNAs correctly. Binds to ribosomes in a GTP-dependent manner. This is Elongation factor 4 from Aeromonas salmonicida (strain A449).